Reading from the N-terminus, the 338-residue chain is Ketol-acid reductoisomerase (NADP(+)) (338 aa).

One can recognise a KARI N-terminal Rossmann domain in the interval 1-181 (MKVYYDKDCD…GGGRTGIIET (181 aa)). NADP(+)-binding positions include 24 to 27 (YGSQ), Arg-47, Ser-50, Thr-52, and 82 to 85 (DEFQ). The active site involves His-107. Gly-133 contacts NADP(+). A KARI C-terminal knotted domain is found at 182–327 (TFKDETETDL…EQLRSMMPWI (146 aa)). Mg(2+)-binding residues include Asp-190, Glu-194, Glu-226, and Glu-230. Ser-251 is a binding site for substrate.

Belongs to the ketol-acid reductoisomerase family. The cofactor is Mg(2+).

The catalysed reaction is (2R)-2,3-dihydroxy-3-methylbutanoate + NADP(+) = (2S)-2-acetolactate + NADPH + H(+). It carries out the reaction (2R,3R)-2,3-dihydroxy-3-methylpentanoate + NADP(+) = (S)-2-ethyl-2-hydroxy-3-oxobutanoate + NADPH + H(+). It participates in amino-acid biosynthesis; L-isoleucine biosynthesis; L-isoleucine from 2-oxobutanoate: step 2/4. The protein operates within amino-acid biosynthesis; L-valine biosynthesis; L-valine from pyruvate: step 2/4. Functionally, involved in the biosynthesis of branched-chain amino acids (BCAA). Catalyzes an alkyl-migration followed by a ketol-acid reduction of (S)-2-acetolactate (S2AL) to yield (R)-2,3-dihydroxy-isovalerate. In the isomerase reaction, S2AL is rearranged via a Mg-dependent methyl migration to produce 3-hydroxy-3-methyl-2-ketobutyrate (HMKB). In the reductase reaction, this 2-ketoacid undergoes a metal-dependent reduction by NADPH to yield (R)-2,3-dihydroxy-isovalerate. This is Ketol-acid reductoisomerase (NADP(+)) from Pseudomonas fluorescens (strain SBW25).